We begin with the raw amino-acid sequence, 414 residues long: uncharacterized protein (414 aa).

Disordered stretches follow at residues 136–168, 297–333, and 346–414; these read SSKSMTPTAEKQLEKPLENGSELQEGDSLTVPT, PQNFPNSGMQRAVQAPRPQNKMSYHRNNKNRNAENAS, and ALNA…NGSK. A compositionally biased stretch (polar residues) spans 350–359; it reads PSRSRPTHGS. The span at 399–414 shows a compositional bias: basic and acidic residues; that stretch reads SKSEKIYPEPRRNGSK.

This is an uncharacterized protein from Homo sapiens (Human).